Reading from the N-terminus, the 89-residue chain is Small ribosomal subunit protein uS15 (89 aa).

It belongs to the universal ribosomal protein uS15 family. As to quaternary structure, part of the 30S ribosomal subunit. Forms a bridge to the 50S subunit in the 70S ribosome, contacting the 23S rRNA.

In terms of biological role, one of the primary rRNA binding proteins, it binds directly to 16S rRNA where it helps nucleate assembly of the platform of the 30S subunit by binding and bridging several RNA helices of the 16S rRNA. Functionally, forms an intersubunit bridge (bridge B4) with the 23S rRNA of the 50S subunit in the ribosome. This chain is Small ribosomal subunit protein uS15, found in Latilactobacillus sakei subsp. sakei (strain 23K) (Lactobacillus sakei subsp. sakei).